We begin with the raw amino-acid sequence, 190 residues long: Dynein axonemal light chain 1 (190 aa).

An N-acetylalanine modification is found at alanine 2. LRR repeat units follow at residues 49–70 (NCEK…NGLK), 71–92 (NLRI…EAVG), 94–115 (TLEE…HVMK), and 116–137 (KLKI…VKLA). The residue at position 56 (serine 56) is a Phosphoserine. Positions 150-190 (NPLEEKHSAEGNWVEEATKRVPKLKKLDGTPVIKEDEEEDN) constitute an LRRCT domain.

It belongs to the dynein light chain LC1-type family. As to quaternary structure, interacts with ZMYND10 (via C-terminus). Interacts with DNAH5, a outer arm dynein heavy chain. Interacts with tubulin located within the A-tubule of the outer doublets in a ATP-independent manner.

It is found in the cytoplasm. The protein localises to the cytoskeleton. Its subcellular location is the cilium axoneme. Functionally, part of the multisubunit axonemal ATPase complexes that generate the force for cilia motility and govern beat frequency. Component of the outer arm dynein (ODA). May be involved in a mechanosensory feedback mechanism controlling ODA activity based on external conformational cues by tethering the outer arm dynein heavy chain (DNAH5) to the microtubule within the axoneme. Important for ciliary function in the airways and for the function of the cilia that produce the nodal flow essential for the determination of the left-right asymmetry. The sequence is that of Dynein axonemal light chain 1 (DNAL1) from Bos taurus (Bovine).